We begin with the raw amino-acid sequence, 89 residues long: MALDAAVKQSIIKEYATTEGDTGSPEVQVAVLTQRIKDLTEHMKEHKHDFHTQRGLLAMVGRRKRMLSYLKNTDIARYRALIERLGLRR.

Belongs to the universal ribosomal protein uS15 family. Part of the 30S ribosomal subunit. Forms a bridge to the 50S subunit in the 70S ribosome, contacting the 23S rRNA.

Its function is as follows. One of the primary rRNA binding proteins, it binds directly to 16S rRNA where it helps nucleate assembly of the platform of the 30S subunit by binding and bridging several RNA helices of the 16S rRNA. Forms an intersubunit bridge (bridge B4) with the 23S rRNA of the 50S subunit in the ribosome. This chain is Small ribosomal subunit protein uS15, found in Paenarthrobacter aurescens (strain TC1).